Reading from the N-terminus, the 527-residue chain is Amine oxidase [flavin-containing] A (527 aa).

N-acetylmethionine is present on methionine 1. Residues 1–497 (MASQEKASMA…HSFWERNLPS (497 aa)) lie on the Cytoplasmic side of the membrane. Serine 383 bears the Phosphoserine mark. Cysteine 406 is subject to S-8alpha-FAD cysteine. Residues 498–518 (VGGLLKIIGFSTSITALWIVV) traverse the membrane as a helical; Anchor for type IV membrane protein segment. The Mitochondrial intermembrane portion of the chain corresponds to 519-527 (YKFKLLTRS). The interaction with membrane phospholipid headgroups stretch occupies residues 520-522 (KFK).

The protein belongs to the flavin monoamine oxidase family. As to quaternary structure, monomer, homo- or heterodimer (containing two subunits of similar size). Each subunit contains a covalently bound flavin. Enzymatically active as monomer. Requires FAD as cofactor.

Its subcellular location is the mitochondrion outer membrane. The catalysed reaction is a secondary aliphatic amine + O2 + H2O = a primary amine + an aldehyde + H2O2. The enzyme catalyses a primary methyl amine + O2 + H2O = an aldehyde + H2O2 + NH4(+). It carries out the reaction (R)-adrenaline + O2 + H2O = (R)-3,4-dihydroxymandelaldehyde + methylamine + H2O2. It catalyses the reaction dopamine + O2 + H2O = 3,4-dihydroxyphenylacetaldehyde + H2O2 + NH4(+). The catalysed reaction is tyramine + O2 + H2O = (4-hydroxyphenyl)acetaldehyde + H2O2 + NH4(+). The enzyme catalyses (R)-noradrenaline + O2 + H2O = (R)-3,4-dihydroxymandelaldehyde + H2O2 + NH4(+). It carries out the reaction serotonin + O2 + H2O = (5-hydroxyindol-3-yl)acetaldehyde + H2O2 + NH4(+). It catalyses the reaction kynuramine + O2 + H2O = 3-(2-aminophenyl)-3-oxopropanal + H2O2 + NH4(+). The catalysed reaction is tryptamine + O2 + H2O = indole-3-acetaldehyde + H2O2 + NH4(+). The enzyme catalyses 2-phenylethylamine + O2 + H2O = 2-phenylacetaldehyde + H2O2 + NH4(+). Its function is as follows. Catalyzes the oxidative deamination of primary and some secondary amine such as neurotransmitters, with concomitant reduction of oxygen to hydrogen peroxide and has important functions in the metabolism of neuroactive and vasoactive amines in the central nervous system and peripheral tissues. Preferentially oxidizes serotonin. Also catalyzes the oxidative deamination of kynuramine to 3-(2-aminophenyl)-3-oxopropanal that can spontaneously condense to 4-hydroxyquinoline. This Equus caballus (Horse) protein is Amine oxidase [flavin-containing] A.